The chain runs to 142 residues: uncharacterized protein (142 aa).

The N-acetyltransferase domain occupies 1–138 (MLEKLAEAHP…SFMILVKPLA (138 aa)).

This is an uncharacterized protein from Bacillus subtilis (strain 168).